We begin with the raw amino-acid sequence, 879 residues long: uncharacterized protein (879 aa).

The chain crosses the membrane as a helical span at residues 14–34; sequence LAFFGCGVSVGAFFTLFLMGT.

It is found in the membrane. This is an uncharacterized protein from Mycoplasma pneumoniae (strain ATCC 29342 / M129 / Subtype 1) (Mycoplasmoides pneumoniae).